A 176-amino-acid chain; its full sequence is NAD(P)H-quinone oxidoreductase subunit 6, chloroplastic (176 aa).

A run of 5 helical transmembrane segments spans residues 10–30 (FILV…VLLP), 32–52 (PIYS…LYIL), 61–81 (AQLL…VMFL), 95–115 (VGDG…ITTI), and 152–172 (FLIP…GAIA).

The protein belongs to the complex I subunit 6 family. NDH is composed of at least 16 different subunits, 5 of which are encoded in the nucleus.

Its subcellular location is the plastid. It localises to the chloroplast thylakoid membrane. It catalyses the reaction a plastoquinone + NADH + (n+1) H(+)(in) = a plastoquinol + NAD(+) + n H(+)(out). It carries out the reaction a plastoquinone + NADPH + (n+1) H(+)(in) = a plastoquinol + NADP(+) + n H(+)(out). NDH shuttles electrons from NAD(P)H:plastoquinone, via FMN and iron-sulfur (Fe-S) centers, to quinones in the photosynthetic chain and possibly in a chloroplast respiratory chain. The immediate electron acceptor for the enzyme in this species is believed to be plastoquinone. Couples the redox reaction to proton translocation, and thus conserves the redox energy in a proton gradient. The protein is NAD(P)H-quinone oxidoreductase subunit 6, chloroplastic (ndhG) of Trachelium caeruleum (Blue throatwort).